Consider the following 206-residue polypeptide: Pyridoxine/pyridoxamine 5'-phosphate oxidase (206 aa).

Residues 53-58 (RMVLLK), 68-69 (YT), K75, and Q97 each bind FMN. Residue K58 participates in substrate binding. Residues Y115, R119, and S123 each coordinate substrate. FMN-binding positions include 132-133 (QS) and W177. 183 to 185 (RLH) is a substrate binding site. R187 contributes to the FMN binding site.

Belongs to the pyridoxamine 5'-phosphate oxidase family. In terms of assembly, homodimer. It depends on FMN as a cofactor.

The enzyme catalyses pyridoxamine 5'-phosphate + O2 + H2O = pyridoxal 5'-phosphate + H2O2 + NH4(+). It carries out the reaction pyridoxine 5'-phosphate + O2 = pyridoxal 5'-phosphate + H2O2. It functions in the pathway cofactor metabolism; pyridoxal 5'-phosphate salvage; pyridoxal 5'-phosphate from pyridoxamine 5'-phosphate: step 1/1. Its pathway is cofactor metabolism; pyridoxal 5'-phosphate salvage; pyridoxal 5'-phosphate from pyridoxine 5'-phosphate: step 1/1. Functionally, catalyzes the oxidation of either pyridoxine 5'-phosphate (PNP) or pyridoxamine 5'-phosphate (PMP) into pyridoxal 5'-phosphate (PLP). The sequence is that of Pyridoxine/pyridoxamine 5'-phosphate oxidase from Rhizobium meliloti (strain 1021) (Ensifer meliloti).